Reading from the N-terminus, the 103-residue chain is Small ribosomal subunit protein uS10 (103 aa).

This sequence belongs to the universal ribosomal protein uS10 family. As to quaternary structure, part of the 30S ribosomal subunit.

Its function is as follows. Involved in the binding of tRNA to the ribosomes. In Shewanella denitrificans (strain OS217 / ATCC BAA-1090 / DSM 15013), this protein is Small ribosomal subunit protein uS10.